Consider the following 311-residue polypeptide: Lipoyl synthase (311 aa).

[4Fe-4S] cluster contacts are provided by C47, C52, C58, C73, C77, C80, and S286. Positions 59-276 constitute a Radical SAM core domain; the sequence is WSRHTATYLA…RSVGESLGLF (218 aa).

This sequence belongs to the radical SAM superfamily. Lipoyl synthase family. [4Fe-4S] cluster is required as a cofactor.

The protein localises to the cytoplasm. The enzyme catalyses [[Fe-S] cluster scaffold protein carrying a second [4Fe-4S](2+) cluster] + N(6)-octanoyl-L-lysyl-[protein] + 2 oxidized [2Fe-2S]-[ferredoxin] + 2 S-adenosyl-L-methionine + 4 H(+) = [[Fe-S] cluster scaffold protein] + N(6)-[(R)-dihydrolipoyl]-L-lysyl-[protein] + 4 Fe(3+) + 2 hydrogen sulfide + 2 5'-deoxyadenosine + 2 L-methionine + 2 reduced [2Fe-2S]-[ferredoxin]. It functions in the pathway protein modification; protein lipoylation via endogenous pathway; protein N(6)-(lipoyl)lysine from octanoyl-[acyl-carrier-protein]: step 2/2. Its function is as follows. Catalyzes the radical-mediated insertion of two sulfur atoms into the C-6 and C-8 positions of the octanoyl moiety bound to the lipoyl domains of lipoate-dependent enzymes, thereby converting the octanoylated domains into lipoylated derivatives. This Chlamydia trachomatis serovar L2 (strain ATCC VR-902B / DSM 19102 / 434/Bu) protein is Lipoyl synthase.